The chain runs to 955 residues: RNA polymerase-associated protein RapA (955 aa).

The region spanning 163 to 333 (EVGHRYAPRV…FARLRLLDPE (171 aa)) is the Helicase ATP-binding domain. 176–183 (DEVGLGKT) provides a ligand contact to ATP. The DEAH box signature appears at 279–282 (DEAH). Positions 478–642 (RVDWLLELLL…AVRDELFELL (165 aa)) constitute a Helicase C-terminal domain.

The protein belongs to the SNF2/RAD54 helicase family. RapA subfamily. As to quaternary structure, interacts with the RNAP. Has a higher affinity for the core RNAP than for the holoenzyme. Its ATPase activity is stimulated by binding to RNAP.

Transcription regulator that activates transcription by stimulating RNA polymerase (RNAP) recycling in case of stress conditions such as supercoiled DNA or high salt concentrations. Probably acts by releasing the RNAP, when it is trapped or immobilized on tightly supercoiled DNA. Does not activate transcription on linear DNA. Probably not involved in DNA repair. This Aeromonas salmonicida (strain A449) protein is RNA polymerase-associated protein RapA.